The sequence spans 527 residues: Lysine--tRNA ligase (527 aa).

Mg(2+) contacts are provided by Glu431 and Glu438.

Belongs to the class-II aminoacyl-tRNA synthetase family. In terms of assembly, homodimer. It depends on Mg(2+) as a cofactor.

It is found in the cytoplasm. The enzyme catalyses tRNA(Lys) + L-lysine + ATP = L-lysyl-tRNA(Lys) + AMP + diphosphate. This chain is Lysine--tRNA ligase (lysS), found in Chlamydia pneumoniae (Chlamydophila pneumoniae).